Reading from the N-terminus, the 232-residue chain is MSVHINAEKGQIADTVLLPGDPLRAKFIAETYLENVECYNEVRGMYGFTGTYNGKKVSVQGTGMGVPSISIYVNELIQSYDVQNLIRVGSCGAIRNDVKVRDVILAMTSSTDSQMNRVAFGSVDYAPCADFELLNKAYQEAQKNNLPVAVGSVFTADQFYNEDSQIEKLARYGVLGVEMETTALYTLAAKYGKKALSILTVSDHVLTGEETTAEERQTTFHDMIKLALHTVS.

H4 serves as a coordination point for a purine D-ribonucleoside. Phosphate is bound by residues G20, R24, R43, and 87 to 90; that span reads RVGS. A purine D-ribonucleoside contacts are provided by residues E162, 178–180, and 202–203; these read EME and SD. D203 acts as the Proton donor in catalysis.

Belongs to the PNP/UDP phosphorylase family. As to quaternary structure, homohexamer; trimer of homodimers.

The catalysed reaction is a purine D-ribonucleoside + phosphate = a purine nucleobase + alpha-D-ribose 1-phosphate. It carries out the reaction a purine 2'-deoxy-D-ribonucleoside + phosphate = a purine nucleobase + 2-deoxy-alpha-D-ribose 1-phosphate. In terms of biological role, catalyzes the reversible phosphorolytic breakdown of the N-glycosidic bond in the beta-(deoxy)ribonucleoside molecules, with the formation of the corresponding free purine bases and pentose-1-phosphate. In Bacillus velezensis (strain DSM 23117 / BGSC 10A6 / LMG 26770 / FZB42) (Bacillus amyloliquefaciens subsp. plantarum), this protein is Purine nucleoside phosphorylase DeoD-type.